Here is a 316-residue protein sequence, read N- to C-terminus: 1-aminocyclopropane-1-carboxylate oxidase 2 (316 aa).

A Fe2OG dioxygenase domain is found at 153–253 (PNFGTKVSNY…RMSLASFYNP (101 aa)). Fe cation contacts are provided by histidine 177, aspartate 179, and histidine 234.

It belongs to the iron/ascorbate-dependent oxidoreductase family. The cofactor is Fe cation. As to expression, leaves.

It carries out the reaction 1-aminocyclopropane-1-carboxylate + L-ascorbate + O2 = ethene + L-dehydroascorbate + hydrogen cyanide + CO2 + 2 H2O. Its pathway is alkene biosynthesis; ethylene biosynthesis via S-adenosyl-L-methionine; ethylene from S-adenosyl-L-methionine: step 2/2. The protein is 1-aminocyclopropane-1-carboxylate oxidase 2 (ACO2) of Solanum lycopersicum (Tomato).